The sequence spans 169 residues: Transcription antitermination protein NusB (169 aa).

The segment at 1–23 (MADSKKPAIKKPVPKGDRKANRR) is disordered.

The protein belongs to the NusB family.

Its function is as follows. Involved in transcription antitermination. Required for transcription of ribosomal RNA (rRNA) genes. Binds specifically to the boxA antiterminator sequence of the ribosomal RNA (rrn) operons. The polypeptide is Transcription antitermination protein NusB (Rhodopseudomonas palustris (strain HaA2)).